Consider the following 153-residue polypeptide: UPF0756 membrane protein LSEI_1366 (153 aa).

4 consecutive transmembrane segments (helical) span residues 4–24 (WLFL…SLII), 52–72 (WGVT…EIGF), 85–105 (WIAI…VGLL), and 115–135 (LVFG…GPVI).

This sequence belongs to the UPF0756 family.

It localises to the cell membrane. The chain is UPF0756 membrane protein LSEI_1366 from Lacticaseibacillus paracasei (strain ATCC 334 / BCRC 17002 / CCUG 31169 / CIP 107868 / KCTC 3260 / NRRL B-441) (Lactobacillus paracasei).